The following is a 182-amino-acid chain: Ribosome maturation factor RimM (182 aa).

One can recognise a PRC barrel domain in the interval 103–182 (EDEFYWRELF…RIEVDWDPGF (80 aa)).

Belongs to the RimM family. As to quaternary structure, binds ribosomal protein uS19.

The protein localises to the cytoplasm. An accessory protein needed during the final step in the assembly of 30S ribosomal subunit, possibly for assembly of the head region. Essential for efficient processing of 16S rRNA. May be needed both before and after RbfA during the maturation of 16S rRNA. It has affinity for free ribosomal 30S subunits but not for 70S ribosomes. This Vibrio vulnificus (strain CMCP6) protein is Ribosome maturation factor RimM.